Here is a 107-residue protein sequence, read N- to C-terminus: Histone H4 (107 aa).

The segment covering 1–16 (MPGRGKGGKGGKGYGK) has biased composition (gly residues). A disordered region spans residues 1–23 (MPGRGKGGKGGKGYGKVGAKRHA). Residues 17–21 (VGAKR) mediate DNA binding.

This sequence belongs to the histone H4 family. As to quaternary structure, the nucleosome is a histone octamer containing two molecules each of H2A, H2B, H3 and H4 assembled in one H3-H4 heterotetramer and two H2A-H2B heterodimers. The octamer wraps approximately 147 bp of DNA.

Its subcellular location is the nucleus. It localises to the chromosome. Its function is as follows. Core component of nucleosome. Nucleosomes wrap and compact DNA into chromatin, limiting DNA accessibility to the cellular machineries which require DNA as a template. Histones thereby play a central role in transcription regulation, DNA repair, DNA replication and chromosomal stability. DNA accessibility is regulated via a complex set of post-translational modifications of histones, also called histone code, and nucleosome remodeling. The sequence is that of Histone H4 from Euplotes crassus.